The primary structure comprises 86 residues: Small ribosomal subunit protein uS15 (86 aa).

The protein belongs to the universal ribosomal protein uS15 family. In terms of assembly, part of the 30S ribosomal subunit. Forms a bridge to the 50S subunit in the 70S ribosome, contacting the 23S rRNA.

One of the primary rRNA binding proteins, it binds directly to 16S rRNA where it helps nucleate assembly of the platform of the 30S subunit by binding and bridging several RNA helices of the 16S rRNA. Functionally, forms an intersubunit bridge (bridge B4) with the 23S rRNA of the 50S subunit in the ribosome. This chain is Small ribosomal subunit protein uS15, found in Neorickettsia sennetsu (strain ATCC VR-367 / Miyayama) (Ehrlichia sennetsu).